We begin with the raw amino-acid sequence, 782 residues long: Endonuclease MutS2 (782 aa).

Glycine 336–threonine 343 is an ATP binding site. The region spanning leucine 707–lysine 782 is the Smr domain.

Belongs to the DNA mismatch repair MutS family. MutS2 subfamily. As to quaternary structure, homodimer. Binds to stalled ribosomes, contacting rRNA.

In terms of biological role, endonuclease that is involved in the suppression of homologous recombination and thus may have a key role in the control of bacterial genetic diversity. Its function is as follows. Acts as a ribosome collision sensor, splitting the ribosome into its 2 subunits. Detects stalled/collided 70S ribosomes which it binds and splits by an ATP-hydrolysis driven conformational change. Acts upstream of the ribosome quality control system (RQC), a ribosome-associated complex that mediates the extraction of incompletely synthesized nascent chains from stalled ribosomes and their subsequent degradation. Probably generates substrates for RQC. The chain is Endonuclease MutS2 from Staphylococcus aureus (strain JH1).